The primary structure comprises 874 residues: Coatomer subunit gamma-1 (874 aa).

Positions 1-11 (MLKKFDKKDEE) are enriched in basic and acidic residues. A disordered region spans residues 1–21 (MLKKFDKKDEESGGGSNPFQH). 4 HEAT repeats span residues 64 to 101 (TEAT…IAED), 283 to 320 (KELA…KHPS), 322 to 355 (VTAC…GSES), and 356 to 392 (SIDR…KYPR). The residue at position 594 (Thr594) is a Phosphothreonine. The segment at 609-874 (RQEIFQEQLA…PVDIILASVG (266 aa)) is interaction with ZNF289/ARFGAP2.

It belongs to the COPG family. In terms of assembly, oligomeric complex that consists of at least the alpha, beta, beta', gamma, delta, epsilon and zeta subunits. Interacts with ZNF289/ARFGAP2 through its C-terminal appendage domain. Interacts with EGFR upon EGF treatment; interaction is essential for regulation of EGF-dependent nuclear transport of EGFR by retrograde trafficking from the Golgi to the ER. The coatomer interacts with KDEL receptors; the interaction is important for retrograde trafficking of KDEL-bearing proteins from the Golgi to the endoplasmic reticulum. Interacts with COPB1. Interacts with TMED10 (via C-terminus). Interacts with TMED2, TMED3, TMED7 and TMED9.

The protein localises to the cytoplasm. The protein resides in the golgi apparatus membrane. It localises to the cytoplasmic vesicle. Its subcellular location is the COPI-coated vesicle membrane. In terms of biological role, the coatomer is a cytosolic protein complex that binds to dilysine motifs and reversibly associates with Golgi non-clathrin-coated vesicles, which further mediate biosynthetic protein transport from the ER, via the Golgi up to the trans Golgi network. Coatomer complex is required for budding from Golgi membranes, and is essential for the retrograde Golgi-to-ER transport of dilysine-tagged proteins. In mammals, the coatomer can only be recruited by membranes associated to ADP-ribosylation factors (ARFs), which are small GTP-binding proteins; the complex also influences the Golgi structural integrity, as well as the processing, activity, and endocytic recycling of LDL receptors. Required for limiting lipid storage in lipid droplets. Involved in lipid homeostasis by regulating the presence of perilipin family members PLIN2 and PLIN3 at the lipid droplet surface and promoting the association of adipocyte triglyceride lipase (PNPLA2) with the lipid droplet surface to mediate lipolysis. The chain is Coatomer subunit gamma-1 (COPG1) from Homo sapiens (Human).